The following is a 56-amino-acid chain: Large ribosomal subunit protein bL32c (56 aa).

Belongs to the bacterial ribosomal protein bL32 family.

It is found in the plastid. The protein resides in the chloroplast. This Huperzia lucidula (Shining clubmoss) protein is Large ribosomal subunit protein bL32c.